A 266-amino-acid polypeptide reads, in one-letter code: DLA class II histocompatibility antigen, DR-1 beta chain (266 aa).

Positions 1–29 (MVCLCFLGGSWMTALMLILMVLNPPFAWA) are cleaved as a signal peptide. Residues 30–124 (RDTPPHFLEV…IESFTVQRRV (95 aa)) form a beta-1 region. Residues 30-227 (RDTPPHFLEV…RAQSDSAQSK (198 aa)) are Extracellular-facing. 2 cysteine pairs are disulfide-bonded: cysteine 44–cysteine 108 and cysteine 146–cysteine 202. Asparagine 48 is a glycosylation site (N-linked (GlcNAc...) asparagine). The interval 125–227 (EPTVTVYPTK…RAQSDSAQSK (103 aa)) is beta-2. Positions 126–214 (PTVTVYPTKT…EHPSLTSPVT (89 aa)) constitute an Ig-like C1-type domain. The chain crosses the membrane as a helical span at residues 228-250 (MLSGIGGFVLGLLFLAVGLFIYF). At 251-266 (RNQKGHSGLQPTGLLS) the chain is on the cytoplasmic side.

The protein belongs to the MHC class II family.

The protein resides in the membrane. The sequence is that of DLA class II histocompatibility antigen, DR-1 beta chain from Canis lupus familiaris (Dog).